A 570-amino-acid chain; its full sequence is A-type ATP synthase subunit A (570 aa).

223–230 (GPFGSGKT) serves as a coordination point for ATP.

It belongs to the ATPase alpha/beta chains family. Has multiple subunits with at least A(3), B(3), C, D, E, F, H, I and proteolipid K(x).

The protein resides in the cell membrane. The catalysed reaction is ATP + H2O + 4 H(+)(in) = ADP + phosphate + 5 H(+)(out). Component of the A-type ATP synthase that produces ATP from ADP in the presence of a proton gradient across the membrane. The A chain is the catalytic subunit. The protein is A-type ATP synthase subunit A of Nanoarchaeum equitans (strain Kin4-M).